The chain runs to 693 residues: MPRQFDLEHTRNIGIMAHIDAGKTTTTERILFYTGRVHKIGETHEGSATMDWMEQEQERGITITSAATTAQWKGNRINIIDTPGHVDFTVEVERSLRVLDGSVTVFCAKGGVEPQSETVWRQADKYGVPRMAYVNKMDIMGADFYNVIAMMKDRLQCNAVPIQLPIGSEDCFVGMVDLVTMTSHIFKDDLGQVIEDQPIPDDMIEISNKYREQLLEAVAEQDEELMMKYLEGEEFTLEEIKAGIRKATIAVKMIPVTCGSSYKNKGVQQMLDAVIDFMPSPTDIPAIKGISVDGDTEIERPADDNGPFAALAFKIMTDPYVGKLCFFRVYSGTLNSGSYVLNSTKNKRERIGRILQMHANHREEIQVVHSGDIAAAVGLKDTTTGDTLCEENNPVILESMEFPEPVIEVAIEPKTKAGQEKMGVALQKLAEEDPTFRVHTDAETGQTIIGGMGELHLDIIVDRMLREFKVEANVGNPQVSYKETIRKAVKSEMKYARQSGGKGQYGHCVIELEPREPGAGYEFVNKITGGAIPKEYIAPIDAGIQEAMNTGVLAGYNVVDIKVTLIDGSYHEVDSSEMAFKIAGSMAFKDGCRKANPVLLEPIMKVDVSVPEEYMGDVMGGLNARRGRIEGMEARGGAQNIRAVVPLSEMFGYATALRSSTQGRGTFSMQTSHFEEVPKSIQEKVISSRTTGV.

The region spanning 8 to 282 is the tr-type G domain; the sequence is EHTRNIGIMA…AVIDFMPSPT (275 aa). Residues 17–24, 81–85, and 135–138 contribute to the GTP site; these read AHIDAGKT, DTPGH, and NKMD.

It belongs to the TRAFAC class translation factor GTPase superfamily. Classic translation factor GTPase family. EF-G/EF-2 subfamily.

It is found in the cytoplasm. In terms of biological role, catalyzes the GTP-dependent ribosomal translocation step during translation elongation. During this step, the ribosome changes from the pre-translocational (PRE) to the post-translocational (POST) state as the newly formed A-site-bound peptidyl-tRNA and P-site-bound deacylated tRNA move to the P and E sites, respectively. Catalyzes the coordinated movement of the two tRNA molecules, the mRNA and conformational changes in the ribosome. This is Elongation factor G from Ruminiclostridium cellulolyticum (strain ATCC 35319 / DSM 5812 / JCM 6584 / H10) (Clostridium cellulolyticum).